The chain runs to 203 residues: Thymidylate kinase (203 aa).

14-21 provides a ligand contact to ATP; it reads GMDGIGKS.

This sequence belongs to the thymidylate kinase family.

The catalysed reaction is dTMP + ATP = dTDP + ADP. Phosphorylation of dTMP to form dTDP in both de novo and salvage pathways of dTTP synthesis. This Rickettsia typhi (strain ATCC VR-144 / Wilmington) protein is Thymidylate kinase.